The primary structure comprises 575 residues: Physarolisin (575 aa).

A signal peptide spans 1 to 18 (MRLLSLLFLLGLATLSFA). Residues 19 to 173 (VRSQWAQQGR…SIKNARTQVG (155 aa)) constitute a propeptide, removed in mature form. In terms of domain architecture, Peptidase S53 spans 179-574 (YIVPYVIFDL…SKLLAFVQTL (396 aa)). Asparagine 200 carries N-linked (GlcNAc...) asparagine glycosylation. Residues glutamate 248 and aspartate 252 each act as charge relay system in the active site. N-linked (GlcNAc...) asparagine glycosylation is found at asparagine 262, asparagine 307, asparagine 380, and asparagine 453. The Charge relay system role is filled by serine 484. Residues aspartate 529, isoleucine 530, glycine 552, and aspartate 554 each coordinate Ca(2+).

Ca(2+) is required as a cofactor. In terms of processing, autocatalytically processed. N-glycosylated.

The catalysed reaction is Milk clotting activity. Preferential cleavage of 8-Gly-|-Ser-9 in B chain of insulin most rapidly, followed by 11-Leu-|-Val-12, 19-Cys(SO(3)H)-|-Gly and 24-Phe-|-Phe-25. No action on Ac-Phe-Tyr(I)2.. Inhibited by diisopropylfluorophosphate (DFP) and diazoacetyl-D,L-norleucine methyl ester (DAN). This Physarum polycephalum (Slime mold) protein is Physarolisin.